We begin with the raw amino-acid sequence, 336 residues long: Aspartate carbamoyltransferase catalytic subunit (336 aa).

The carbamoyl phosphate site is built by R72 and T73. K100 contacts L-aspartate. The carbamoyl phosphate site is built by R122, H152, and Q155. Positions 185 and 240 each coordinate L-aspartate. The carbamoyl phosphate site is built by G281 and P282.

It belongs to the aspartate/ornithine carbamoyltransferase superfamily. ATCase family. Heterododecamer (2C3:3R2) of six catalytic PyrB chains organized as two trimers (C3), and six regulatory PyrI chains organized as three dimers (R2).

The enzyme catalyses carbamoyl phosphate + L-aspartate = N-carbamoyl-L-aspartate + phosphate + H(+). The protein operates within pyrimidine metabolism; UMP biosynthesis via de novo pathway; (S)-dihydroorotate from bicarbonate: step 2/3. Its function is as follows. Catalyzes the condensation of carbamoyl phosphate and aspartate to form carbamoyl aspartate and inorganic phosphate, the committed step in the de novo pyrimidine nucleotide biosynthesis pathway. The protein is Aspartate carbamoyltransferase catalytic subunit of Marinobacter nauticus (strain ATCC 700491 / DSM 11845 / VT8) (Marinobacter aquaeolei).